We begin with the raw amino-acid sequence, 730 residues long: Guanylate cyclase soluble subunit alpha-2 (730 aa).

A disordered region spans residues 1 to 53 (MSRRKISSESFSSLGSDYLETSPEEEGECPLSKLCWNGSRSPPGPPGSRAAAM). In terms of domain architecture, Guanylate cyclase spans 519-646 (TMLFSDIVGF…NNVTLASKFE (128 aa)).

The protein belongs to the adenylyl cyclase class-4/guanylyl cyclase family. As to quaternary structure, heterodimer of an alpha and a beta chain.

It is found in the cytoplasm. The enzyme catalyses GTP = 3',5'-cyclic GMP + diphosphate. Its activity is regulated as follows. Activated by nitric oxide in the presence of magnesium or manganese ions. In terms of biological role, has guanylyl cyclase on binding to the beta-1 subunit. The protein is Guanylate cyclase soluble subunit alpha-2 (Gucy1a2) of Rattus norvegicus (Rat).